Reading from the N-terminus, the 200-residue chain is Probable GTP-binding protein EngB (200 aa).

The EngB-type G domain maps to 25–199 (SGYEVAFAGR…ISLLDRWYEW (175 aa)). GTP is bound by residues 33–40 (GRSNAGKS), 60–64 (GRTQL), 78–81 (DLPG), 145–148 (TKAD), and 178–180 (FSS). 2 residues coordinate Mg(2+): Ser-40 and Thr-62.

It belongs to the TRAFAC class TrmE-Era-EngA-EngB-Septin-like GTPase superfamily. EngB GTPase family. It depends on Mg(2+) as a cofactor.

In terms of biological role, necessary for normal cell division and for the maintenance of normal septation. In Legionella pneumophila (strain Corby), this protein is Probable GTP-binding protein EngB.